We begin with the raw amino-acid sequence, 64 residues long: Large ribosomal subunit protein bL33c (64 aa).

This sequence belongs to the bacterial ribosomal protein bL33 family.

It localises to the plastid. Its subcellular location is the chloroplast. The polypeptide is Large ribosomal subunit protein bL33c (Phaeodactylum tricornutum (strain CCAP 1055/1)).